Consider the following 380-residue polypeptide: Cytochrome b (380 aa).

4 consecutive transmembrane segments (helical) span residues 34–54 (FGSL…FLAM), 78–99 (WLLR…YFHI), 114–134 (WNIG…GYVL), and 179–199 (FFTF…IHLL). Residues His84 and His98 each contribute to the heme b site. 2 residues coordinate heme b: His183 and His197. His202 lines the a ubiquinone pocket. The next 4 membrane-spanning stretches (helical) occupy residues 227–247 (YKDL…STFA), 289–309 (LGGV…PIIH), 321–341 (IAKT…WIGG), and 348–368 (FITI…LLIP).

Belongs to the cytochrome b family. The cytochrome bc1 complex contains 3 respiratory subunits (MT-CYB, CYC1 and UQCRFS1), 2 core proteins (UQCRC1 and UQCRC2) and probably 6 low-molecular weight proteins. The cofactor is heme b.

It localises to the mitochondrion inner membrane. Component of the ubiquinol-cytochrome c reductase complex (complex III or cytochrome b-c1 complex) that is part of the mitochondrial respiratory chain. The b-c1 complex mediates electron transfer from ubiquinol to cytochrome c. Contributes to the generation of a proton gradient across the mitochondrial membrane that is then used for ATP synthesis. This Rana amurensis (Siberian wood frog) protein is Cytochrome b (mt-cyb).